The chain runs to 271 residues: Cobalt import ATP-binding protein CbiO (271 aa).

In terms of domain architecture, ABC transporter spans Leu-2 to Thr-236. Gly-34 to Ser-41 is a binding site for ATP.

The protein belongs to the ABC transporter superfamily. Cobalt importer (TC 3.A.1.18.1) family. Forms an energy-coupling factor (ECF) transporter complex composed of an ATP-binding protein (A component, CbiO), a transmembrane protein (T component, CbiQ) and 2 possible substrate-capture proteins (S components, CbiM and CbiN) of unknown stoichimetry.

The protein resides in the cell inner membrane. The protein operates within cofactor biosynthesis; adenosylcobalamin biosynthesis. Part of the energy-coupling factor (ECF) transporter complex CbiMNOQ involved in cobalt import. Presumably responsible for energy coupling to the transport system. In Salmonella typhi, this protein is Cobalt import ATP-binding protein CbiO.